A 352-amino-acid chain; its full sequence is Probable dual-specificity RNA methyltransferase RlmN (352 aa).

Glutamate 99 acts as the Proton acceptor in catalysis. The Radical SAM core domain occupies 105 to 339 (TKSRTTACVS…VTVRRSRGKD (235 aa)). A disulfide bridge links cysteine 112 with cysteine 344. Residues cysteine 119, cysteine 123, and cysteine 126 each contribute to the [4Fe-4S] cluster site. Residues 170 to 171 (GE), serine 202, 225 to 227 (SLH), and asparagine 301 each bind S-adenosyl-L-methionine. Residue cysteine 344 is the S-methylcysteine intermediate of the active site.

Belongs to the radical SAM superfamily. RlmN family. It depends on [4Fe-4S] cluster as a cofactor.

It localises to the cytoplasm. It carries out the reaction adenosine(2503) in 23S rRNA + 2 reduced [2Fe-2S]-[ferredoxin] + 2 S-adenosyl-L-methionine = 2-methyladenosine(2503) in 23S rRNA + 5'-deoxyadenosine + L-methionine + 2 oxidized [2Fe-2S]-[ferredoxin] + S-adenosyl-L-homocysteine. The catalysed reaction is adenosine(37) in tRNA + 2 reduced [2Fe-2S]-[ferredoxin] + 2 S-adenosyl-L-methionine = 2-methyladenosine(37) in tRNA + 5'-deoxyadenosine + L-methionine + 2 oxidized [2Fe-2S]-[ferredoxin] + S-adenosyl-L-homocysteine. Its function is as follows. Specifically methylates position 2 of adenine 2503 in 23S rRNA and position 2 of adenine 37 in tRNAs. The chain is Probable dual-specificity RNA methyltransferase RlmN from Christiangramia forsetii (strain DSM 17595 / CGMCC 1.15422 / KT0803) (Gramella forsetii).